The following is a 611-amino-acid chain: UvrABC system protein C (611 aa).

The GIY-YIG domain maps to 14 to 91 (TSPGCYIHKD…IKENKPKYNI (78 aa)). One can recognise a UVR domain in the interval 196–231 (DQIIEDLRGKMAGAAQTMEFEKAAEYRDLIQSIGTL).

The protein belongs to the UvrC family. In terms of assembly, interacts with UvrB in an incision complex.

It is found in the cytoplasm. In terms of biological role, the UvrABC repair system catalyzes the recognition and processing of DNA lesions. UvrC both incises the 5' and 3' sides of the lesion. The N-terminal half is responsible for the 3' incision and the C-terminal half is responsible for the 5' incision. The sequence is that of UvrABC system protein C from Streptococcus gordonii (strain Challis / ATCC 35105 / BCRC 15272 / CH1 / DL1 / V288).